The sequence spans 29 residues: Galanin (29 aa).

Alanine 29 carries the post-translational modification Alanine amide.

It belongs to the galanin family.

It localises to the secreted. Functionally, contracts smooth muscle of the gastrointestinal and genitourinary tract, regulates growth hormone release, modulates insulin release, and may be involved in the control of adrenal secretion. This is Galanin (gal) from Pelophylax ridibundus (Marsh frog).